The chain runs to 692 residues: Ribonuclease J (692 aa).

Residues 1-91 (MTDNNQNNEN…RNYAKEELDN (91 aa)) are disordered. A compositionally biased stretch (basic and acidic residues) spans 9-25 (ENHENSSENSKDHHEAR). Residues 57 to 79 (HHKKEHRPNKKPNNHHKPKHASQ) show a composition bias toward basic residues. N6-acetyllysine occurs at positions 135 and 141. Residues H209, H211, D213, H214, H278, and D300 each coordinate Zn(2+). 3 positions are modified to N6-acetyllysine: K324, K338, and K398. Substrate is bound at residue 501–505 (HVSGH). Position 512 is an N6-acetyllysine (K512). H527 serves as a coordination point for Zn(2+). N6-acetyllysine occurs at positions 548, 635, and 650.

It belongs to the metallo-beta-lactamase superfamily. RNA-metabolizing metallo-beta-lactamase-like family. Bacterial RNase J subfamily. Homodimer. Homotetramer; dimer of homodimers. Interacts with RNA helicase RhpA, might be a member of a minimal RNA degradosome complex. The cofactor is Zn(2+). Post-translationally, acetylated on nine lysine residues. Some of the residues are acetylated by multiple different mechanisms. RimL is partially responsible for the acetylation of Lys-324, Lys-398 and Lys-650. HPB8_1270 homolog is partially responsible for the acetylation of Lys-324, Lys-398, Lys-512 and Lys-650. Acetyl-phosphate-mediated non-enzymatic acetylation pathway takes part in the acetylation of Lys-135, Lys-324, Lys-398, Lys-512 and Lys-650. Acetylation of the remaining residues Lys-141, Lys-338, Lys-548 and Lys-635 occurs by a yet undetermined mechanism. Acetylation on a number of these residues is important for growth regulation and proper cell morphology.

It is found in the cytoplasm. Catalytic activity is regulated by the balance between homodimers and homotetramers, with homotetramers being the active forms of this enzyme. Acetylation allosterically regulates the homooligomerization state and hence the catalytic activity. In terms of biological role, an RNase that has 5'-3' exoribonuclease and endoribonuclease activity. Degrades 5'-monophosphorylated ssRNA and dsRNA, considerably more active on ssRNA. Association with RhpA significantly increases the dsRNase activity. Degrades RNA substrate with hairpin structures at both ends with low activity, but presence of RhpA significantly increases the activity on this substrate. Stimulates ATPase activity of RNA helicase RhpA. Involved in stabilization of mRNA but apparently not rRNA. The polypeptide is Ribonuclease J (Helicobacter pylori (strain J99 / ATCC 700824) (Campylobacter pylori J99)).